The primary structure comprises 497 residues: UPF0371 protein DIP2346 (497 aa).

This sequence belongs to the UPF0371 family.

The sequence is that of UPF0371 protein DIP2346 from Corynebacterium diphtheriae (strain ATCC 700971 / NCTC 13129 / Biotype gravis).